The sequence spans 209 residues: Ribosomal RNA large subunit methyltransferase E (209 aa).

Residues glycine 63, tryptophan 65, aspartate 83, aspartate 99, and aspartate 124 each coordinate S-adenosyl-L-methionine. Lysine 164 acts as the Proton acceptor in catalysis.

The protein belongs to the class I-like SAM-binding methyltransferase superfamily. RNA methyltransferase RlmE family.

The protein resides in the cytoplasm. It catalyses the reaction uridine(2552) in 23S rRNA + S-adenosyl-L-methionine = 2'-O-methyluridine(2552) in 23S rRNA + S-adenosyl-L-homocysteine + H(+). Specifically methylates the uridine in position 2552 of 23S rRNA at the 2'-O position of the ribose in the fully assembled 50S ribosomal subunit. This chain is Ribosomal RNA large subunit methyltransferase E, found in Shewanella denitrificans (strain OS217 / ATCC BAA-1090 / DSM 15013).